The chain runs to 146 residues: Tyrosinase cofactor (146 aa).

The segment at residues 1-30 (MPELTRRRALGAAAVVAAGVPLVALPAARA) is a signal peptide (tat-type signal). Residues 65–85 (RTVTDGGGHHGGGHGGDGHGG) are disordered. Residues 69–85 (DGGGHHGGGHGGDGHGG) show a composition bias toward gly residues.

This sequence belongs to the melC1 family. Predicted to be exported by the Tat system. The position of the signal peptide cleavage has not been experimentally proven.

In terms of biological role, this protein may function to deliver copper to tyrosinase. This Streptomyces antibioticus protein is Tyrosinase cofactor (melC1).